Reading from the N-terminus, the 156-residue chain is S-ribosylhomocysteine lyase (156 aa).

Histidine 56, histidine 60, and cysteine 123 together coordinate Fe cation.

It belongs to the LuxS family. In terms of assembly, homodimer. Fe cation is required as a cofactor.

The catalysed reaction is S-(5-deoxy-D-ribos-5-yl)-L-homocysteine = (S)-4,5-dihydroxypentane-2,3-dione + L-homocysteine. Its function is as follows. Involved in the synthesis of autoinducer 2 (AI-2) which is secreted by bacteria and is used to communicate both the cell density and the metabolic potential of the environment. The regulation of gene expression in response to changes in cell density is called quorum sensing. Catalyzes the transformation of S-ribosylhomocysteine (RHC) to homocysteine (HC) and 4,5-dihydroxy-2,3-pentadione (DPD). In Staphylococcus epidermidis (strain ATCC 35984 / DSM 28319 / BCRC 17069 / CCUG 31568 / BM 3577 / RP62A), this protein is S-ribosylhomocysteine lyase.